A 593-amino-acid polypeptide reads, in one-letter code: Actin-histidine N-methyltransferase (593 aa).

Positions 1–21 (MGKKSRVKTQKSGTGATAAVS) are disordered. S-adenosyl-L-methionine-binding positions include Arg-75, 104-106 (EGF), Arg-254, 275-279 (DMCNH), and 325-327 (SGF). The 221-residue stretch at 94 to 314 (EGFEIANFEE…AGEQIYIFYG (221 aa)) folds into the SET domain. A disordered region spans residues 549 to 593 (GFVNGENSLFNGTKSESENLIKEESNRETEDAKESSSESTDEVKE). The segment covering 553–562 (GENSLFNGTK) has biased composition (polar residues). Over residues 563–593 (SESENLIKEESNRETEDAKESSSESTDEVKE) the composition is skewed to basic and acidic residues.

It belongs to the class V-like SAM-binding methyltransferase superfamily. SETD3 actin-histidine methyltransferase family.

It localises to the cytoplasm. It catalyses the reaction L-histidyl-[protein] + S-adenosyl-L-methionine = N(tele)-methyl-L-histidyl-[protein] + S-adenosyl-L-homocysteine + H(+). Functionally, protein-histidine N-methyltransferase that specifically mediates 3-methylhistidine (tele-methylhistidine) methylation of actin at 'His-73'. Does not have protein-lysine N-methyltransferase activity and probably only catalyzes histidine methylation of actin. This is Actin-histidine N-methyltransferase from Gallus gallus (Chicken).